A 218-amino-acid polypeptide reads, in one-letter code: UPF0329 protein ECU10_1860 (218 aa).

Belongs to the UPF0329 family.

The chain is UPF0329 protein ECU10_1860 from Encephalitozoon cuniculi (strain GB-M1) (Microsporidian parasite).